The sequence spans 440 residues: Alpha-methylserine aldolase (440 aa).

An N6-(pyridoxal phosphate)lysine modification is found at Lys-255.

This sequence belongs to the SHMT family. Alpha-methylserine aldolase subfamily. As to quaternary structure, homodimer. Pyridoxal 5'-phosphate serves as cofactor.

It catalyses the reaction 2-methyl-L-serine = formaldehyde + L-alanine. Functionally, catalyzes the reversible interconversion of alpha-methyl-L-serine to L-alanine and formaldehyde. This Variovorax paradoxus protein is Alpha-methylserine aldolase.